Reading from the N-terminus, the 582-residue chain is uncharacterized protein (582 aa).

Transmembrane regions (helical) follow at residues 29-49 (LFIVLLRFIIPSILVSFFAAL), 117-137 (ISAPITVIINALTLLITMGLA), 155-175 (VWATGFITNVIVSIATSMIIV), 225-245 (YVYILAGLFTIQTFNQMYFLL), 254-274 (FISIIPPLANLINILFDYLLI), 287-307 (ATVIGWSLSCLAYVIYNIVLI), 329-349 (YLYLIILIGLASFFRNAALSV), 376-396 (SIFGSVTPISNLMLQSVWGLI), 432-452 (IVYLLFGFGLNNIFLINLFNI), 458-478 (LVVSNLVLRITLVQSIFIALS), 491-511 (IGMAWIASLMQGLFTFAPVFF), and 523-543 (IYLYIWIQPINAILTCIGNWI).

The protein resides in the cell membrane. This is an uncharacterized protein from Mycoplasmoides gallisepticum (strain R(low / passage 15 / clone 2)) (Mycoplasma gallisepticum).